We begin with the raw amino-acid sequence, 306 residues long: Mitochondrial basic amino acids transporter (306 aa).

Helical transmembrane passes span 2–22 (ALDF…GHPF), 61–81 (GLGS…GVQG), 96–116 (FLAG…MELA), 153–172 (GMVS…FLTY), 187–207 (LLVP…WLST), and 255–275 (LLRA…VLTY). 3 Solcar repeats span residues 2–86 (ALDF…TLRA), 90–178 (DSPL…MTRA), and 190–275 (PKLL…VLTY). The disordered stretch occupies residues 284–306 (DSEAALGTSPTPAGSALAQPSSL). The span at 291–306 (TSPTPAGSALAQPSSL) shows a compositional bias: polar residues.

The protein belongs to the mitochondrial carrier (TC 2.A.29) family. In terms of tissue distribution, widely expressed, with highest levels in the brain, including cortex, cerebellum, hippocampus and hypothalamus, and moderate levels in liver, kidney, heart and testis.

The protein resides in the mitochondrion inner membrane. It catalyses the reaction L-lysine(out) + L-arginine(in) = L-lysine(in) + L-arginine(out). The catalysed reaction is L-histidine(out) + L-arginine(in) = L-histidine(in) + L-arginine(out). It carries out the reaction L-ornithine(in) + L-arginine(out) = L-ornithine(out) + L-arginine(in). The enzyme catalyses L-homoarginine(in) + L-arginine(out) = L-homoarginine(out) + L-arginine(in). It catalyses the reaction N(omega)-methyl-L-arginine(in) + L-arginine(out) = N(omega)-methyl-L-arginine(out) + L-arginine(in). The catalysed reaction is L-arginine(in) = L-arginine(out). It carries out the reaction L-lysine(in) = L-lysine(out). The enzyme catalyses L-ornithine(in) = L-ornithine(out). It catalyses the reaction L-histidine(out) = L-histidine(in). Functionally, mitochondrial transporter of arginine, lysine, homoarginine, methylarginine. Transports with a much lesser extent, ornithine and histidine. Does not transport carnitine nor acylcarnitines. Functions by both counter-exchange and uniport mechanisms. Plays a physiological role in the import of basic amino acids into mitochondria for mitochondrial protein synthesis and amino acid degradation. The polypeptide is Mitochondrial basic amino acids transporter (Slc25a29) (Mus musculus (Mouse)).